The primary structure comprises 150 residues: MSDIQIAVQEQPFDQNAAYRWLSEQHSVGATVVFVGKVRDLNLGDEVSSLYLEHYPAMTEKALTEIVAQAKARWDIQRVCVIHRVGLLQTGDEIVFVGVSSAHRGEAYQANEFIMDFLKSKAPFWKKEKTTQGERWIESRDTDQQALARW.

Substrate-binding positions include 37 to 39 (KVR), 103 to 104 (HR), Lys-119, and 126 to 128 (KKE).

The protein belongs to the MoaE family. Heterotetramer of 2 MoaD subunits and 2 MoaE subunits. Also stable as homodimer. The enzyme changes between these two forms during catalysis.

It carries out the reaction 2 [molybdopterin-synthase sulfur-carrier protein]-C-terminal-Gly-aminoethanethioate + cyclic pyranopterin phosphate + H2O = molybdopterin + 2 [molybdopterin-synthase sulfur-carrier protein]-C-terminal Gly-Gly + 2 H(+). It functions in the pathway cofactor biosynthesis; molybdopterin biosynthesis. Functionally, converts molybdopterin precursor Z into molybdopterin. This requires the incorporation of two sulfur atoms into precursor Z to generate a dithiolene group. The sulfur is provided by MoaD. The polypeptide is Molybdopterin synthase catalytic subunit (moaE) (Pasteurella multocida (strain Pm70)).